A 1036-amino-acid polypeptide reads, in one-letter code: MWRFSGRRGLCAVQRLSCGRVHHRVWREKSDQACERALQYKVGEKIHGFTVNQVTPVPELFLTAVKLSHDNTGARYLHLAREDKNNLFSVQFRTTPMDSTGVPHVLEHTVLCGSQKYPCRDPFFKMLNRSLSTFMNAMTASDYTIYPFSTQNPKDFQNLLSVYLDATFFPCLRELDFWQEGWRLEHENPRDPQTPLIFKGVVFNEMKGAFTDNERIFSQHLQNKLLPDHTYSVVSGGDPLCIPELTWEQLKQFHATHYHPSNARFFTYGNFQLEGHLKQIHEEALSKFQRLEQSTAVPAQPHWDKPREFHITCGPDSLATETAKQTTVSVSFLLPDITDTFEAFTLSLLSSLLIAGPNSPFYKALIESGLGTDFSPDVGYNGYTREAYFSVGLQGIAEKDVKTVRELVDRTIEEVIEKGFEDDRIEALLHKIEIQTKHQSASFGLTLTSYIASCWNHDGDPVELLQIGSQLTRFRKCLKENPKFLQEKVEQYFKNNQHKLTLSMKPDDKYYEKQTQMETEKLEQKVNSLSPADKQQIYEKGLELQTQQSKHQDASCLPALKVSDIEPSMPFTKLDIGLAAGDIPVQYCPQPTNGMVYFRAFSSLNTLPEDLRPIVPLFCSVLTKLGCGILNYREQAQQIELKTGGMSVTPHVLPDDSQLDTYEQGVLFSSLCLERNLPDMMHLWSEIFNNPCFEEEEHFKVLVKMTAQELSNGISDSGHLYAALRASKTLTPSGDLQETFSGMDQVKVMKRIAEMTDIKPILRKLPRIKKYLLNCDNMRCSVNATPQQMPQAEKEVENFLRNVGRSKKERKPVRPHIVEKPTPSGPSGAAHVSGSQIVRKLVTDPTFKPCQMKTHFVLPFPVNYIGECVRTVPYADPDHASLKILARLMTAKFLHTEIREKGGAYGGGAKLTHSGIFTLYSYRDPNSIETLQSFGKAVDWAKSGKFTQQDIDEAKLSVFSTVDSPVAPSDKGMDHFLYGLSDEMKQAYREQLFAVNHDKLTSVSHKYLGIGKSTHGLAILGPENSKIAKDPSWIIK.

A mitochondrion-targeting transit peptide spans 1–15; sequence MWRFSGRRGLCAVQR. Position 104 (H104) interacts with Zn(2+). The active-site Proton acceptor is the E107. Positions 108 and 205 each coordinate Zn(2+). An intrachain disulfide couples C119 to C556. An N6-acetyllysine modification is found at K759. An N6-acetyllysine; alternate modification is found at K770. K770 is modified (N6-succinyllysine; alternate). The segment at 806 to 833 is disordered; that stretch reads SKKERKPVRPHIVEKPTPSGPSGAAHVS. The residue at position 848 (K848) is an N6-succinyllysine. Residue K883 is modified to N6-acetyllysine. K945 is subject to N6-succinyllysine.

The protein belongs to the peptidase M16 family. PreP subfamily. Monomer and homodimer; homodimerization is induced by binding of the substrate. The cofactor is Zn(2+). A disulfide bond locks the enzyme in the closed conformation preventing substrate entry into the catalytic chamber.

It localises to the mitochondrion matrix. Mainly exists in a closed and catalytically competent conformation but a closed-to-open switch allows substrate entry into the catalytic chamber. Substrate binding induces closure and dimerization. A disulfide bond may lock the enzyme in a closed conformation preventing substrate entry into the catalytic chamber, participating in redox regulation of the enzyme. Inhibited by metal-chelating agents. Inhibited by nickel and zinc excess, and slightly activated by manganese. In terms of biological role, metalloendopeptidase of the mitochondrial matrix that functions in peptide cleavage and degradation rather than in protein processing. Has an ATP-independent activity. Specifically cleaves peptides in the range of 5 to 65 residues. Shows a preference for cleavage after small polar residues and before basic residues, but without any positional preference. Degrades the transit peptides of mitochondrial proteins after their cleavage. Also degrades other unstructured peptides. It is also able to degrade amyloid-beta protein 40, one of the peptides produced by APP processing, when it accumulates in mitochondrion. It is a highly efficient protease, at least toward amyloid-beta protein 40. Cleaves that peptide at a specific position and is probably not processive, releasing digested peptides intermediates that can be further cleaved subsequently. It is also able to degrade amyloid-beta protein 42. The chain is Presequence protease, mitochondrial from Mus musculus (Mouse).